Reading from the N-terminus, the 61-residue chain is MAKKSMIAKQKRTQKYKVREYTRCERCGRPHSVMRKFKLCRICFRELAYKGQIPGVKKASW.

4 residues coordinate Zn(2+): Cys24, Cys27, Cys40, and Cys43.

The protein belongs to the universal ribosomal protein uS14 family. Zinc-binding uS14 subfamily. Part of the 30S ribosomal subunit. Contacts proteins S3 and S10. Zn(2+) is required as a cofactor.

Its function is as follows. Binds 16S rRNA, required for the assembly of 30S particles and may also be responsible for determining the conformation of the 16S rRNA at the A site. In Halalkalibacterium halodurans (strain ATCC BAA-125 / DSM 18197 / FERM 7344 / JCM 9153 / C-125) (Bacillus halodurans), this protein is Small ribosomal subunit protein uS14.